The following is a 271-amino-acid chain: Small ribosomal subunit protein uS3 (271 aa).

The region spanning 40-108 is the KH type-2 domain; the sequence is IRKFLKKRLY…TIIVNIVEVR (69 aa). The interval 210 to 271 is disordered; sequence PTRDGVNPRE…RPQRTENKGN (62 aa). Residues 215 to 247 are compositionally biased toward basic and acidic residues; it reads VNPREESRKSDRRDNKRDNRRNDRRGNDRRGND.

The protein belongs to the universal ribosomal protein uS3 family. In terms of assembly, part of the 30S ribosomal subunit. Forms a tight complex with proteins S10 and S14.

In terms of biological role, binds the lower part of the 30S subunit head. Binds mRNA in the 70S ribosome, positioning it for translation. The chain is Small ribosomal subunit protein uS3 from Clostridioides difficile (strain 630) (Peptoclostridium difficile).